Consider the following 466-residue polypeptide: 3-isopropylmalate dehydratase large subunit (466 aa).

[4Fe-4S] cluster-binding residues include Cys-347, Cys-407, and Cys-410.

It belongs to the aconitase/IPM isomerase family. LeuC type 1 subfamily. As to quaternary structure, heterodimer of LeuC and LeuD. It depends on [4Fe-4S] cluster as a cofactor.

It carries out the reaction (2R,3S)-3-isopropylmalate = (2S)-2-isopropylmalate. Its pathway is amino-acid biosynthesis; L-leucine biosynthesis; L-leucine from 3-methyl-2-oxobutanoate: step 2/4. Its function is as follows. Catalyzes the isomerization between 2-isopropylmalate and 3-isopropylmalate, via the formation of 2-isopropylmaleate. The chain is 3-isopropylmalate dehydratase large subunit from Shewanella halifaxensis (strain HAW-EB4).